The sequence spans 331 residues: Ketol-acid reductoisomerase (NADP(+)) (331 aa).

The 181-residue stretch at A2–T182 folds into the KARI N-terminal Rossmann domain. Residues Y25–Q28, S51, S53, and D83–Q86 contribute to the NADP(+) site. H108 is an active-site residue. G134 serves as a coordination point for NADP(+). Residues S183–L328 form the KARI C-terminal knotted domain. 4 residues coordinate Mg(2+): D191, E195, E227, and E231. S252 contributes to the substrate binding site.

The protein belongs to the ketol-acid reductoisomerase family. It depends on Mg(2+) as a cofactor.

The catalysed reaction is (2R)-2,3-dihydroxy-3-methylbutanoate + NADP(+) = (2S)-2-acetolactate + NADPH + H(+). It catalyses the reaction (2R,3R)-2,3-dihydroxy-3-methylpentanoate + NADP(+) = (S)-2-ethyl-2-hydroxy-3-oxobutanoate + NADPH + H(+). The protein operates within amino-acid biosynthesis; L-isoleucine biosynthesis; L-isoleucine from 2-oxobutanoate: step 2/4. It functions in the pathway amino-acid biosynthesis; L-valine biosynthesis; L-valine from pyruvate: step 2/4. Functionally, involved in the biosynthesis of branched-chain amino acids (BCAA). Catalyzes an alkyl-migration followed by a ketol-acid reduction of (S)-2-acetolactate (S2AL) to yield (R)-2,3-dihydroxy-isovalerate. In the isomerase reaction, S2AL is rearranged via a Mg-dependent methyl migration to produce 3-hydroxy-3-methyl-2-ketobutyrate (HMKB). In the reductase reaction, this 2-ketoacid undergoes a metal-dependent reduction by NADPH to yield (R)-2,3-dihydroxy-isovalerate. This Crocosphaera subtropica (strain ATCC 51142 / BH68) (Cyanothece sp. (strain ATCC 51142)) protein is Ketol-acid reductoisomerase (NADP(+)).